A 310-amino-acid polypeptide reads, in one-letter code: tRNA uridine(34) hydroxylase (310 aa).

A Rhodanese domain is found at 127–225 (KDKDTIVIDT…YLEDISKEES (99 aa)). Cys185 functions as the Cysteine persulfide intermediate in the catalytic mechanism.

The protein belongs to the TrhO family.

The enzyme catalyses uridine(34) in tRNA + AH2 + O2 = 5-hydroxyuridine(34) in tRNA + A + H2O. Catalyzes oxygen-dependent 5-hydroxyuridine (ho5U) modification at position 34 in tRNAs. The polypeptide is tRNA uridine(34) hydroxylase (Prochlorococcus marinus (strain MIT 9515)).